Here is a 174-residue protein sequence, read N- to C-terminus: Type II restriction enzyme Bsp6I (174 aa).

It catalyses the reaction Endonucleolytic cleavage of DNA to give specific double-stranded fragments with terminal 5'-phosphates.. A P subtype restriction enzyme that recognizes the double-stranded sequence 5'-GCNGC-3' and cleaves after C-2. In Bacillus sp. (strain RFL6), this protein is Type II restriction enzyme Bsp6I.